The chain runs to 162 residues: 2-C-methyl-D-erythritol 2,4-cyclodiphosphate synthase (162 aa).

Positions 10 and 12 each coordinate a divalent metal cation. Residues 10–12 (DVH) and 36–37 (HS) each bind 4-CDP-2-C-methyl-D-erythritol 2-phosphate. His-44 lines the a divalent metal cation pocket. 4-CDP-2-C-methyl-D-erythritol 2-phosphate contacts are provided by residues 58–60 (DIG), 63–67 (FSDTD), and Arg-144.

The protein belongs to the IspF family. In terms of assembly, homotrimer. A divalent metal cation serves as cofactor.

The catalysed reaction is 4-CDP-2-C-methyl-D-erythritol 2-phosphate = 2-C-methyl-D-erythritol 2,4-cyclic diphosphate + CMP. The protein operates within isoprenoid biosynthesis; isopentenyl diphosphate biosynthesis via DXP pathway; isopentenyl diphosphate from 1-deoxy-D-xylulose 5-phosphate: step 4/6. In terms of biological role, involved in the biosynthesis of isopentenyl diphosphate (IPP) and dimethylallyl diphosphate (DMAPP), two major building blocks of isoprenoid compounds. Catalyzes the conversion of 4-diphosphocytidyl-2-C-methyl-D-erythritol 2-phosphate (CDP-ME2P) to 2-C-methyl-D-erythritol 2,4-cyclodiphosphate (ME-CPP) with a corresponding release of cytidine 5-monophosphate (CMP). This is 2-C-methyl-D-erythritol 2,4-cyclodiphosphate synthase from Burkholderia thailandensis (strain ATCC 700388 / DSM 13276 / CCUG 48851 / CIP 106301 / E264).